Consider the following 393-residue polypeptide: Sulfate adenylyltransferase (393 aa).

It belongs to the sulfate adenylyltransferase family.

It carries out the reaction sulfate + ATP + H(+) = adenosine 5'-phosphosulfate + diphosphate. The protein operates within sulfur metabolism; hydrogen sulfide biosynthesis; sulfite from sulfate: step 1/3. This chain is Sulfate adenylyltransferase, found in Symbiobacterium thermophilum (strain DSM 24528 / JCM 14929 / IAM 14863 / T).